Consider the following 264-residue polypeptide: Small ribosomal subunit protein eS1 (264 aa).

The segment at 233 to 264 (GEGGGAGKPAGDETGAKVERADGYEPPVQESV) is disordered. Over residues 242 to 255 (AGDETGAKVERADG) the composition is skewed to basic and acidic residues.

This sequence belongs to the eukaryotic ribosomal protein eS1 family. In terms of assembly, component of the small ribosomal subunit. Mature ribosomes consist of a small (40S) and a large (60S) subunit. The 40S subunit contains about 33 different proteins and 1 molecule of RNA (18S). The 60S subunit contains about 49 different proteins and 3 molecules of RNA (28S, 5.8S and 5S). Part of the small subunit (SSU) processome, composed of more than 70 proteins and the RNA chaperone small nucleolar RNA (snoRNA) U3.

It is found in the cytoplasm. Its subcellular location is the nucleus. The protein resides in the nucleolus. Component of the small ribosomal subunit. The ribosome is a large ribonucleoprotein complex responsible for the synthesis of proteins in the cell. Part of the small subunit (SSU) processome, first precursor of the small eukaryotic ribosomal subunit. During the assembly of the SSU processome in the nucleolus, many ribosome biogenesis factors, an RNA chaperone and ribosomal proteins associate with the nascent pre-rRNA and work in concert to generate RNA folding, modifications, rearrangements and cleavage as well as targeted degradation of pre-ribosomal RNA by the RNA exosome. May play a role during erythropoiesis. The sequence is that of Small ribosomal subunit protein eS1 (rps3a) from Xenopus tropicalis (Western clawed frog).